Here is a 316-residue protein sequence, read N- to C-terminus: Phosphoglycerate mutase-like protein AT74 (316 aa).

Residue H17 is the Tele-phosphohistidine intermediate of the active site. E106 serves as the catalytic Proton donor/acceptor. The tract at residues 275–316 (KECETEATEDREEEEEEEGKRVNLLTSSEYSNEPELYNGQCC) is disordered. Acidic residues predominate over residues 279–291 (TEATEDREEEEEE).

Belongs to the phosphoglycerate mutase family. Expressed in roots, leaves, stems, flowers and siliques.

In terms of biological role, phosphoglycerate mutase-like protein lacking PGM activity. May play a role in carbohydrates metabolism. This Arabidopsis thaliana (Mouse-ear cress) protein is Phosphoglycerate mutase-like protein AT74.